The primary structure comprises 483 residues: Glutamate--tRNA ligase (483 aa).

The 'HIGH' region signature appears at 11 to 21 (PSPTGHLHIGN). 4 residues coordinate Zn(2+): C108, C110, H135, and D137. A 'KMSKS' region motif is present at residues 252–256 (KLSKR). Residue K255 participates in ATP binding.

Belongs to the class-I aminoacyl-tRNA synthetase family. Glutamate--tRNA ligase type 1 subfamily. As to quaternary structure, monomer. The cofactor is Zn(2+).

It localises to the cytoplasm. It carries out the reaction tRNA(Glu) + L-glutamate + ATP = L-glutamyl-tRNA(Glu) + AMP + diphosphate. Its function is as follows. Catalyzes the attachment of glutamate to tRNA(Glu) in a two-step reaction: glutamate is first activated by ATP to form Glu-AMP and then transferred to the acceptor end of tRNA(Glu). In Bacillus subtilis (strain 168), this protein is Glutamate--tRNA ligase.